Reading from the N-terminus, the 249-residue chain is Ribonuclease PH (249 aa).

Residues Arg-90 and 128 to 130 contribute to the phosphate site; that span reads GTR.

This sequence belongs to the RNase PH family. In terms of assembly, homohexameric ring arranged as a trimer of dimers.

It catalyses the reaction tRNA(n+1) + phosphate = tRNA(n) + a ribonucleoside 5'-diphosphate. Its function is as follows. Phosphorolytic 3'-5' exoribonuclease that plays an important role in tRNA 3'-end maturation. Removes nucleotide residues following the 3'-CCA terminus of tRNAs; can also add nucleotides to the ends of RNA molecules by using nucleoside diphosphates as substrates, but this may not be physiologically important. Probably plays a role in initiation of 16S rRNA degradation (leading to ribosome degradation) during starvation. The chain is Ribonuclease PH from Parasynechococcus marenigrum (strain WH8102).